Here is a 129-residue protein sequence, read N- to C-terminus: Large ribosomal subunit protein bL21 (129 aa).

This sequence belongs to the bacterial ribosomal protein bL21 family. As to quaternary structure, part of the 50S ribosomal subunit. Contacts protein L20.

In terms of biological role, this protein binds to 23S rRNA in the presence of protein L20. The protein is Large ribosomal subunit protein bL21 of Prochlorococcus marinus (strain MIT 9313).